Reading from the N-terminus, the 468-residue chain is F-box/LRR-repeat protein At4g14096 (468 aa).

The 54-residue stretch at 7 to 60 folds into the F-box domain; it reads RDIISSLPEAISCHILSFLPTKEAASTSVLSKKWRYLFAFVPNLDLDESVYLNP. LRR repeat units follow at residues 114 to 136, 138 to 167, 169 to 194, 216 to 241, 292 to 323, and 324 to 349; these read VSDL…MFLS, TLVR…YIDS, YFEK…VLDD, STQV…KFTD, TLYL…TIES, and NPEV…IFQG.

In Arabidopsis thaliana (Mouse-ear cress), this protein is F-box/LRR-repeat protein At4g14096.